An 85-amino-acid polypeptide reads, in one-letter code: Putative membrane protein insertion efficiency factor (85 aa).

The protein belongs to the UPF0161 family.

The protein localises to the cell inner membrane. Could be involved in insertion of integral membrane proteins into the membrane. This is Putative membrane protein insertion efficiency factor from Vibrio atlanticus (strain LGP32) (Vibrio splendidus (strain Mel32)).